A 548-amino-acid polypeptide reads, in one-letter code: MFCYQCQETAQGKGCTLKGVCGKTAEVAGLQDLLMYLMKGISKLTTTLRKQGVESSTANKFIVDGLFMTITNANFDSSRFVSKIKEAYQLRENLLNELHRLGIHLSLTCDCLTWKSDKVEEMEVKAKEVGILATENEDIRSLCELLTYGVKGMAAYVEHAYNLGFEDTSLYAFMQDALVATTRSDLTVADLTQWVLTCGEYGVKAMALLDKANTSTYGNPEITKVNIGVGKNPGILISGHDLRDIQDLLEQTEGTGIDVYTHGEMLPAHYYPAFKKYKHFVGNYGSAWWKQTSDFETFNGVILFTTNCLVPPRSSATYADRVYTTGSTGFEGFPHIADRKPGGSKDFSALIEHAKKCAPPTEIEHGEIIGGFAHEQVFQLADKVIDAVKSGAIRKFFVMAGCDGRMKSRSYYTEFAEKLPKDTVILTAGCAKYRYNKLPLGEIRGIPRVLDAGQCNDSYSLVMIALKLKEIFGLDDVNELPIAYNIAWYEQKAVIVLLALLYLGVKNIHLGPTLPAFLSPNVAKVLVDNFGIAGIGSVDEDMELFLGK.

Residues C3, C6, C15, and C21 each contribute to the [4Fe-4S] cluster site. Residues H240, E264, C308, C402, C430, C455, E490, and K492 each coordinate hybrid [4Fe-2O-2S] cluster. The residue at position 402 (C402) is a Cysteine persulfide.

Belongs to the HCP family. The cofactor is [4Fe-4S] cluster. Hybrid [4Fe-2O-2S] cluster serves as cofactor.

The protein resides in the cytoplasm. The enzyme catalyses A + NH4(+) + H2O = hydroxylamine + AH2 + H(+). Functionally, catalyzes the reduction of hydroxylamine to form NH(3) and H(2)O. This Parabacteroides distasonis (strain ATCC 8503 / DSM 20701 / CIP 104284 / JCM 5825 / NCTC 11152) protein is Hydroxylamine reductase.